The chain runs to 203 residues: Holliday junction branch migration complex subunit RuvA (203 aa).

The interval 1-63 is domain I; sequence MIGKLSGRVD…EDHINLYGFL (63 aa). The domain II stretch occupies residues 64 to 142; it reads SLEEKSFFNL…KISSSSAAIK (79 aa). The segment at 143–149 is flexible linker; it reads DSLNIKG. The domain III stretch occupies residues 150-203; the sequence is ITPVASSEVIKALINMGFSRFEAQNAVQEIITKNPEISIDELIRTALKNRNSNF.

This sequence belongs to the RuvA family. In terms of assembly, homotetramer. Forms an RuvA(8)-RuvB(12)-Holliday junction (HJ) complex. HJ DNA is sandwiched between 2 RuvA tetramers; dsDNA enters through RuvA and exits via RuvB. An RuvB hexamer assembles on each DNA strand where it exits the tetramer. Each RuvB hexamer is contacted by two RuvA subunits (via domain III) on 2 adjacent RuvB subunits; this complex drives branch migration. In the full resolvosome a probable DNA-RuvA(4)-RuvB(12)-RuvC(2) complex forms which resolves the HJ.

The protein resides in the cytoplasm. In terms of biological role, the RuvA-RuvB-RuvC complex processes Holliday junction (HJ) DNA during genetic recombination and DNA repair, while the RuvA-RuvB complex plays an important role in the rescue of blocked DNA replication forks via replication fork reversal (RFR). RuvA specifically binds to HJ cruciform DNA, conferring on it an open structure. The RuvB hexamer acts as an ATP-dependent pump, pulling dsDNA into and through the RuvAB complex. HJ branch migration allows RuvC to scan DNA until it finds its consensus sequence, where it cleaves and resolves the cruciform DNA. In Rickettsia bellii (strain OSU 85-389), this protein is Holliday junction branch migration complex subunit RuvA.